The sequence spans 330 residues: Aspartate--ammonia ligase (330 aa).

It belongs to the class-II aminoacyl-tRNA synthetase family. AsnA subfamily.

The protein localises to the cytoplasm. It catalyses the reaction L-aspartate + NH4(+) + ATP = L-asparagine + AMP + diphosphate + H(+). Its pathway is amino-acid biosynthesis; L-asparagine biosynthesis; L-asparagine from L-aspartate (ammonia route): step 1/1. In Pectobacterium carotovorum subsp. carotovorum (strain PC1), this protein is Aspartate--ammonia ligase.